Consider the following 173-residue polypeptide: Streptothricin acetyltransferase A (173 aa).

Residues 21–173 enclose the N-acetyltransferase domain; sequence VVFGRMIPAF…EIAIFWYYKF (153 aa).

The protein belongs to the acetyltransferase family. GNAT subfamily. In terms of assembly, homodimer.

It catalyses the reaction streptothricin D + acetyl-CoA = N(beta)-acetylstreptothricin D + CoA + H(+). It carries out the reaction streptothricin F + acetyl-CoA = N(beta)-acetylstreptothricin F + CoA + H(+). In terms of biological role, involved in resistance to streptothricin, a broad-spectrum antibiotic produced by streptomycetes. Detoxifies streptothricin via acetylation of the beta amino group of the first beta-lysyl moiety of streptothricin. This chain is Streptothricin acetyltransferase A, found in Bacillus subtilis (strain 168).